Reading from the N-terminus, the 158-residue chain is Small ribosomal subunit protein uS7 (158 aa).

The protein belongs to the universal ribosomal protein uS7 family. As to quaternary structure, part of the 30S ribosomal subunit. Contacts proteins S9 and S11.

Functionally, one of the primary rRNA binding proteins, it binds directly to 16S rRNA where it nucleates assembly of the head domain of the 30S subunit. Is located at the subunit interface close to the decoding center, probably blocks exit of the E-site tRNA. The protein is Small ribosomal subunit protein uS7 of Wolbachia pipientis subsp. Culex pipiens (strain wPip).